A 517-amino-acid polypeptide reads, in one-letter code: General transcription factor IIF subunit 1 (517 aa).

An N-acetylalanine modification is found at Ala-2. Position 156 is a phosphothreonine (Thr-156). The tract at residues 178–466 is disordered; the sequence is QQRRLKDQDQ…DAVRRYLTRK (289 aa). Phosphoserine is present on residues Ser-217, Ser-218, Ser-221, and Ser-224. Over residues 232–251 the composition is skewed to basic residues; it reads PKAKKKAPLAKGGRKKKKKK. 2 stretches are compositionally biased toward acidic residues: residues 255 to 270 and 303 to 325; these read DEAF…EGQE and EQSD…EEEE. Thr-331 bears the Phosphothreonine mark. The span at 343 to 355 shows a compositional bias: acidic residues; sequence EESDSSEESDIDS. The span at 364-374 shows a compositional bias: basic residues; sequence AKKKTPPKRER. Phosphoserine is present on residues Ser-377, Ser-380, Ser-381, and Ser-385. Residues 377 to 391 show a composition bias toward low complexity; it reads SGGSSRGNSRPGTPS. A Phosphothreonine modification is found at Thr-389. Residue Ser-391 is modified to Phosphoserine. At Lys-407 the chain carries N6-acetyllysine. The segment covering 428–452 has biased composition (polar residues); the sequence is GPQSLSGKSTPQPPSGKTTPNSGDV. Phosphoserine is present on residues Ser-431, Ser-433, and Ser-436. A phosphothreonine mark is found at Thr-437 and Thr-446. Position 449 is a phosphoserine (Ser-449). The Zn(2+) site is built by Glu-503, His-512, and Glu-517.

This sequence belongs to the TFIIF alpha subunit family. Heterodimer of an alpha and a beta subunit. Interacts with GTF2F2, CTDP1, TAF6/TAFII80 and URI1. Interacts with GTF2B (via C-terminus and preferentially via acetylated form); this interaction prevents binding of GTF2B to GTF2F2. Part of TBP-based Pol II pre-initiation complex (PIC), in which Pol II core assembles with general transcription factors and other specific initiation factors including GTF2E1, GTF2E2, GTF2F1, GTF2F2, TCEA1, ERCC2, ERCC3, GTF2H2, GTF2H3, GTF2H4, GTF2H5, GTF2A1, GTF2A2, GTF2B and TBP; this large multi-subunit PIC complex mediates DNA unwinding and targets Pol II core to the transcription start site where the first phosphodiester bond forms. Post-translationally, phosphorylated on Ser and other residues by TAF1 and casein kinase II-like kinases.

Its subcellular location is the nucleus. TFIIF is a general transcription initiation factor that binds to RNA polymerase II and helps to recruit it to the initiation complex in collaboration with TFIIB. It promotes transcription elongation. The sequence is that of General transcription factor IIF subunit 1 (GTF2F1) from Homo sapiens (Human).